The primary structure comprises 159 residues: UPF0178 protein AZC_4000 (159 aa).

The protein belongs to the UPF0178 family.

The sequence is that of UPF0178 protein AZC_4000 from Azorhizobium caulinodans (strain ATCC 43989 / DSM 5975 / JCM 20966 / LMG 6465 / NBRC 14845 / NCIMB 13405 / ORS 571).